Here is a 224-residue protein sequence, read N- to C-terminus: Large ribosomal subunit protein uL1m (224 aa).

Belongs to the universal ribosomal protein uL1 family.

The protein resides in the mitochondrion. The protein is Large ribosomal subunit protein uL1m (RPL1) of Reclinomonas americana.